The primary structure comprises 446 residues: Signal recognition particle 54 kDa protein (446 aa).

Residues 104–111, 184–188, and 242–245 contribute to the GTP site; these read GLQGSGKT, DTAGR, and TKMD.

It belongs to the GTP-binding SRP family. SRP54 subfamily. As to quaternary structure, part of the signal recognition particle protein translocation system, which is composed of SRP and FtsY. Archaeal SRP consists of a 7S RNA molecule of 300 nucleotides and two protein subunits: SRP54 and SRP19.

It localises to the cytoplasm. The catalysed reaction is GTP + H2O = GDP + phosphate + H(+). Its function is as follows. Involved in targeting and insertion of nascent membrane proteins into the cytoplasmic membrane. Binds to the hydrophobic signal sequence of the ribosome-nascent chain (RNC) as it emerges from the ribosomes. The SRP-RNC complex is then targeted to the cytoplasmic membrane where it interacts with the SRP receptor FtsY. The chain is Signal recognition particle 54 kDa protein from Methanocorpusculum labreanum (strain ATCC 43576 / DSM 4855 / Z).